Reading from the N-terminus, the 206-residue chain is Fibroblast growth factor 4 (206 aa).

Residues 1 to 30 (MSGPGTAAVALLPAVLLALLAPWAGRGGAA) form the signal peptide.

Belongs to the heparin-binding growth factors family. As to quaternary structure, interacts with FGFR1, FGFR2, FGFR3 and FGFR4. Affinity between fibroblast growth factors (FGFs) and their receptors is increased by heparan sulfate glycosaminoglycans that function as coreceptors.

It is found in the secreted. Its function is as follows. Plays an important role in the regulation of embryonic development, cell proliferation, and cell differentiation. Required for normal limb and cardiac valve development during embryogenesis. May play a role in embryonic molar tooth bud development via inducing the expression of MSX1, MSX2 and MSX1-mediated expression of SDC1 in dental mesenchyme cells. This Homo sapiens (Human) protein is Fibroblast growth factor 4.